Reading from the N-terminus, the 946-residue chain is Bifunctional glutamine synthetase adenylyltransferase/adenylyl-removing enzyme (946 aa).

An adenylyl removase region spans residues 1-440 (MKPLSSPLQQ…VFNELIGDDE (440 aa)). The segment at 449 to 946 (SEQWRELWQD…ASWQKWLVEE (498 aa)) is adenylyl transferase.

Belongs to the GlnE family. It depends on Mg(2+) as a cofactor.

It carries out the reaction [glutamine synthetase]-O(4)-(5'-adenylyl)-L-tyrosine + phosphate = [glutamine synthetase]-L-tyrosine + ADP. It catalyses the reaction [glutamine synthetase]-L-tyrosine + ATP = [glutamine synthetase]-O(4)-(5'-adenylyl)-L-tyrosine + diphosphate. Functionally, involved in the regulation of glutamine synthetase GlnA, a key enzyme in the process to assimilate ammonia. When cellular nitrogen levels are high, the C-terminal adenylyl transferase (AT) inactivates GlnA by covalent transfer of an adenylyl group from ATP to specific tyrosine residue of GlnA, thus reducing its activity. Conversely, when nitrogen levels are low, the N-terminal adenylyl removase (AR) activates GlnA by removing the adenylyl group by phosphorolysis, increasing its activity. The regulatory region of GlnE binds the signal transduction protein PII (GlnB) which indicates the nitrogen status of the cell. The polypeptide is Bifunctional glutamine synthetase adenylyltransferase/adenylyl-removing enzyme (Escherichia coli O9:H4 (strain HS)).